Here is a 393-residue protein sequence, read N- to C-terminus: MTRIGTPLSPTATRVLLCGCGELGKEVVIELQRLGVEVIAVDRYANAPAMQVAHRSHVINMLDGAALRAVIEAEKPHFIVPEIEAIATATLVELEAEGFTVIPTARATSLTMNREGIRRLAAEELDLPTSPYHFADTFEDYSRAVQDLGFPCVVKPVMSSSGKGQSLLRSVDDVQKAWDYAQEGGRAGKGRVIIEGFIDFDYEITLLTVRHVGGTTFCAPVGHRQEKGDYQESWQPQAMSPKALAESERVAKAVTEALGGRGLFGVELFIKGDQVWFSEVSPRPHDTGLVTLISQDLSQFALHARAILGLPIPLIRQFGPSASAVILVEGTSTQTAFANLGAALSEPDTALRLFGKPEVNGQRRMGVALARDESIEAARAKATRAAQAVVVEL.

Residues 22 to 23 (EL) and Glu-82 contribute to the N(1)-(5-phospho-beta-D-ribosyl)glycinamide site. ATP contacts are provided by residues Arg-114, Lys-155, 160 to 165 (SSGKGQ), 195 to 198 (EGFI), and Glu-203. An ATP-grasp domain is found at 119 to 308 (RLAAEELDLP…QFALHARAIL (190 aa)). Residues Glu-267 and Glu-279 each contribute to the Mg(2+) site. Residues Asp-286, Lys-356, and 363 to 364 (RR) contribute to the N(1)-(5-phospho-beta-D-ribosyl)glycinamide site.

Belongs to the PurK/PurT family. Homodimer.

It catalyses the reaction N(1)-(5-phospho-beta-D-ribosyl)glycinamide + formate + ATP = N(2)-formyl-N(1)-(5-phospho-beta-D-ribosyl)glycinamide + ADP + phosphate + H(+). Its pathway is purine metabolism; IMP biosynthesis via de novo pathway; N(2)-formyl-N(1)-(5-phospho-D-ribosyl)glycinamide from N(1)-(5-phospho-D-ribosyl)glycinamide (formate route): step 1/1. Functionally, involved in the de novo purine biosynthesis. Catalyzes the transfer of formate to 5-phospho-ribosyl-glycinamide (GAR), producing 5-phospho-ribosyl-N-formylglycinamide (FGAR). Formate is provided by PurU via hydrolysis of 10-formyl-tetrahydrofolate. The polypeptide is Formate-dependent phosphoribosylglycinamide formyltransferase (Pseudomonas fluorescens (strain ATCC BAA-477 / NRRL B-23932 / Pf-5)).